Here is a 76-residue protein sequence, read N- to C-terminus: uncharacterized protein (76 aa).

A helical transmembrane segment spans residues 24 to 44 (GAIFLVCYPLYCVVCFVSVLC).

Its subcellular location is the membrane. This is an uncharacterized protein from Schizosaccharomyces pombe (strain 972 / ATCC 24843) (Fission yeast).